We begin with the raw amino-acid sequence, 210 residues long: Guanylate kinase (210 aa).

The Guanylate kinase-like domain occupies 23–203; sequence GRVVVLSGPS…ACAELVSLLV (181 aa). Residue 30–37 participates in ATP binding; that stretch reads GPSAVGKS.

It belongs to the guanylate kinase family.

The protein resides in the cytoplasm. The catalysed reaction is GMP + ATP = GDP + ADP. Functionally, essential for recycling GMP and indirectly, cGMP. The sequence is that of Guanylate kinase (gmk) from Mycobacterium leprae (strain TN).